Consider the following 79-residue polypeptide: DNA gyrase inhibitor YacG (79 aa).

4 residues coordinate Zn(2+): Cys7, Cys10, Cys26, and Cys30.

Belongs to the DNA gyrase inhibitor YacG family. In terms of assembly, interacts with GyrB. Requires Zn(2+) as cofactor.

In terms of biological role, inhibits all the catalytic activities of DNA gyrase by preventing its interaction with DNA. Acts by binding directly to the C-terminal domain of GyrB, which probably disrupts DNA binding by the gyrase. This chain is DNA gyrase inhibitor YacG, found in Shewanella pealeana (strain ATCC 700345 / ANG-SQ1).